The primary structure comprises 268 residues: 4-hydroxy-tetrahydrodipicolinate reductase (268 aa).

NAD(+) contacts are provided by residues 10–15 and Asp-36; that span reads GASGRM. Arg-37 contributes to the NADP(+) binding site. NAD(+) is bound by residues 99 to 101 and 123 to 126; these read GTT and SANM. His-156 functions as the Proton donor/acceptor in the catalytic mechanism. His-157 is a binding site for (S)-2,3,4,5-tetrahydrodipicolinate. The Proton donor role is filled by Lys-160. 166 to 167 provides a ligand contact to (S)-2,3,4,5-tetrahydrodipicolinate; sequence GT.

This sequence belongs to the DapB family.

The protein resides in the cytoplasm. The catalysed reaction is (S)-2,3,4,5-tetrahydrodipicolinate + NAD(+) + H2O = (2S,4S)-4-hydroxy-2,3,4,5-tetrahydrodipicolinate + NADH + H(+). It catalyses the reaction (S)-2,3,4,5-tetrahydrodipicolinate + NADP(+) + H2O = (2S,4S)-4-hydroxy-2,3,4,5-tetrahydrodipicolinate + NADPH + H(+). Its pathway is amino-acid biosynthesis; L-lysine biosynthesis via DAP pathway; (S)-tetrahydrodipicolinate from L-aspartate: step 4/4. Catalyzes the conversion of 4-hydroxy-tetrahydrodipicolinate (HTPA) to tetrahydrodipicolinate. This Burkholderia pseudomallei (strain 1710b) protein is 4-hydroxy-tetrahydrodipicolinate reductase.